A 299-amino-acid chain; its full sequence is Peroxisomal biogenesis factor 19 (299 aa).

Residues 1–63 (MAAAEGDGGV…SPGDTAKDAL (63 aa)) form a disordered region. N-acetylalanine is present on Ala2. Residues 2 to 56 (AAAEGDGGVRAEADRELEELLESALDDFDKAKPSPAPPPTTTAPDASGPQKRSPG) form a docking to the peroxisome membrane and binding to PEX3 region. A necessary for PEX19 function on peroxisome biogenesis region spans residues 2 to 91 (AAAEGDGGVR…QATAEFEKAM (90 aa)). A compositionally biased stretch (acidic residues) spans 16–27 (RELEELLESALD). Ser35, Ser54, and Ser66 each carry phosphoserine. Residue Thr236 is modified to Phosphothreonine. Cysteine methyl ester is present on Cys296. A lipid anchor (S-farnesyl cysteine) is attached at Cys296. A propeptide spans 297–299 (LIM) (removed in mature form).

The protein belongs to the peroxin-19 family. As to quaternary structure, interacts with a broad range of peroxisomal membrane proteins, including PEX3, PEX10, PEX11A, PEX11B, PEX12, PEX13, PEX14 and PEX16, PXMP2/PMP22, PXMP4/PMP24, SLC25A17/PMP34, ABCD1/ALDP, ABCD2/ALDRP, and ABCD3/PMP70. Also interacts with the tumor suppressor CDKN2A/p19ARF.

It localises to the cytoplasm. The protein localises to the peroxisome membrane. Functionally, necessary for early peroxisomal biogenesis. Acts both as a cytosolic chaperone and as an import receptor for peroxisomal membrane proteins (PMPs). Binds and stabilizes newly synthesized PMPs in the cytoplasm by interacting with their hydrophobic membrane-spanning domains, and targets them to the peroxisome membrane by binding to the integral membrane protein PEX3. Excludes CDKN2A from the nucleus and prevents its interaction with MDM2, which results in active degradation of TP53. This is Peroxisomal biogenesis factor 19 (PEX19) from Bos taurus (Bovine).